Here is a 217-residue protein sequence, read N- to C-terminus: Imidazole glycerol phosphate synthase subunit HisH (217 aa).

Residues 6-214 (QIAVVDYDMG…VTQVAAAQLQ (209 aa)) form the Glutamine amidotransferase type-1 domain. The active-site Nucleophile is cysteine 84. Active-site residues include histidine 189 and glutamate 191.

Heterodimer of HisH and HisF.

Its subcellular location is the cytoplasm. It catalyses the reaction 5-[(5-phospho-1-deoxy-D-ribulos-1-ylimino)methylamino]-1-(5-phospho-beta-D-ribosyl)imidazole-4-carboxamide + L-glutamine = D-erythro-1-(imidazol-4-yl)glycerol 3-phosphate + 5-amino-1-(5-phospho-beta-D-ribosyl)imidazole-4-carboxamide + L-glutamate + H(+). It carries out the reaction L-glutamine + H2O = L-glutamate + NH4(+). It functions in the pathway amino-acid biosynthesis; L-histidine biosynthesis; L-histidine from 5-phospho-alpha-D-ribose 1-diphosphate: step 5/9. Functionally, IGPS catalyzes the conversion of PRFAR and glutamine to IGP, AICAR and glutamate. The HisH subunit catalyzes the hydrolysis of glutamine to glutamate and ammonia as part of the synthesis of IGP and AICAR. The resulting ammonia molecule is channeled to the active site of HisF. The sequence is that of Imidazole glycerol phosphate synthase subunit HisH from Synechococcus sp. (strain ATCC 27144 / PCC 6301 / SAUG 1402/1) (Anacystis nidulans).